The following is a 699-amino-acid chain: DNA ligase (699 aa).

Residues 47-51, 96-97, and glutamate 128 contribute to the NAD(+) site; these read DAQYD and SL. The active-site N6-AMP-lysine intermediate is lysine 130. NAD(+)-binding residues include arginine 151, glutamate 186, lysine 303, and lysine 327. Zn(2+) contacts are provided by cysteine 422, cysteine 425, cysteine 440, and cysteine 446. Positions 620-699 constitute a BRCT domain; the sequence is GDNLLLSNQT…EEWIKMVNEL (80 aa).

Belongs to the NAD-dependent DNA ligase family. LigA subfamily. Requires Mg(2+) as cofactor. It depends on Mn(2+) as a cofactor.

The catalysed reaction is NAD(+) + (deoxyribonucleotide)n-3'-hydroxyl + 5'-phospho-(deoxyribonucleotide)m = (deoxyribonucleotide)n+m + AMP + beta-nicotinamide D-nucleotide.. Its function is as follows. DNA ligase that catalyzes the formation of phosphodiester linkages between 5'-phosphoryl and 3'-hydroxyl groups in double-stranded DNA using NAD as a coenzyme and as the energy source for the reaction. It is essential for DNA replication and repair of damaged DNA. The chain is DNA ligase from Orientia tsutsugamushi (strain Ikeda) (Rickettsia tsutsugamushi).